A 1498-amino-acid polypeptide reads, in one-letter code: Methyl-CpG-binding domain protein 5 (1498 aa).

An MBD domain is found at 11-81 (DKEGGLAAIQ…KVFNFDPGAA (71 aa)). The tract at residues 57–68 (DGTCKCGLECPL) is required for interaction with ASXL1/2/3. 5 disordered regions span residues 199 to 274 (PRQR…TPLS), 329 to 350 (HHKPPQGPPPPPPPSCALQKKP), 452 to 521 (RIEA…YKDI), 594 to 642 (LAGN…SGRA), and 1350 to 1377 (NGCVPSPSDAKSISSEDDLRNPDSPSSH). The span at 333–343 (PQGPPPPPPPS) shows a compositional bias: pro residues. Composition is skewed to low complexity over residues 499 to 511 (SPRPSMPSSPSTK) and 594 to 613 (LAGNNSSSSNNSGAVASSGN). The segment covering 614-624 (TEGHSTLNTMF) has biased composition (polar residues). One can recognise a PWWP domain in the interval 1385–1409 (RTFNVGDLVWGQIKGLTSWPGKFIR). The segment at 1473-1498 (SGTVHQIPQGDRQMRPPKPKRRKISR) is disordered. Residues 1487-1498 (RPPKPKRRKISR) are compositionally biased toward basic residues.

Core component of the polycomb repressive deubiquitinase (PR-DUB) complex, at least composed of BAP1, one of ASXL1, ASXL2 or (probably) ASXL3, and one of MBD5 or MBD6. Distinct combinations of ASXL and MBD proteins may preferentially bind specific histone modification marks. The PR-DUB core associates with a number of accessory proteins, including FOXK1, FOXK2, KDM1B, HCFC1 and OGT; KDM1B specifically associates with ASXL2 PR-DUB complexes. Interacts (via MBD domain) with ASXL1, ASXL2 and ASXL3 (via PHD domain); the interaction is probably direct, mediates association with other PR-DUB complex core components. Expressed at highest levels in adult testis and Brain. As to expression, expressed at highest levels in the oocyte.

The protein localises to the nucleus. It is found in the chromosome. Non-catalytic component of the polycomb repressive deubiquitinase (PR-DUB) complex, a complex that specifically mediates deubiquitination of histone H2A monoubiquitinated at 'Lys-120' (H2AK119ub1). Important for stability of PR-DUB components and stimulating its ubiquitinase activity. As part of the PR-DUB complex, associates with chromatin enriched in histone marks H3K4me1, H3K4me3, and H3K27Ac, but not in H3K27me3. The PR-DUB complex is an epigenetic regulator of gene expression, including genes involved in cell growth and survivability. MBD5 and MBD6 containing complexes associate with distinct chromatin regions enriched in genes involved in different pathways. Heterochromatin recruitment is not mediated by DNA methylation. The PR-DUB complex is an epigenetic regulator of gene expression, including genes involved in development, cell communication, signaling, cell proliferation and cell viability. This chain is Methyl-CpG-binding domain protein 5 (Mbd5), found in Mus musculus (Mouse).